The chain runs to 459 residues: C-type lectin domain family 14 member A (459 aa).

Positions 1-21 are cleaved as a signal peptide; sequence MRPALALCLLCPAFWPRPGNG. At 22–386 the chain is on the extracellular side; sequence EHPTADRAAC…VSLTFDTSST (365 aa). The 141-residue stretch at 33–173 folds into the C-type lectin domain; sequence ASGACYSLHH…LRTDGYLCKY (141 aa). Cysteine 143 and cysteine 162 are oxidised to a cystine. N-linked (GlcNAc...) asparagine glycosylation is present at asparagine 189. In terms of domain architecture, EGF-like spans 246 to 288; that stretch reads PCSGRYLLAGKCVELPDCLDHLGDFTCECAVGFELGKDGRSCE. 3 N-linked (GlcNAc...) asparagine glycosylation sites follow: asparagine 306, asparagine 317, and asparagine 370. Residues 387 to 407 form a helical membrane-spanning segment; it reads VVFILVSIAVIVLVVLTITVL. Over 408 to 459 the chain is Cytoplasmic; it reads GLFKLCFHKSRSSRTGKGALDSPGVECDAEATSLHHSSTQCTDIGVKSGTVA. Serine 440 bears the Phosphoserine mark.

It localises to the membrane. The protein is C-type lectin domain family 14 member A (Clec14a) of Mus musculus (Mouse).